A 431-amino-acid polypeptide reads, in one-letter code: Nocturnin (431 aa).

A mitochondrion-targeting transit peptide spans 1–75; sequence MFHSPRRLCS…SMGTGTSRLY (75 aa). Positions 20 to 31 are enriched in low complexity; it reads LRRLPAPGLRRP. The interval 20 to 41 is disordered; that stretch reads LRRLPAPGLRRPLSPPAAVPRP. Positions 32–41 are enriched in pro residues; the sequence is LSPPAAVPRP. Residue glutamate 195 participates in Mg(2+) binding. Substrate is bound by residues glutamate 195, 219–221, asparagine 263, 286–289, and 324–326; these read KPW, HLKA, and DFN. Positions 343–353 are interaction with PPARG; sequence NLNSAYKLLSA. Histidine 414 provides a ligand contact to substrate.

The protein belongs to the CCR4/nocturin family. In terms of assembly, interacts with PPARG. Mg(2+) serves as cofactor. As to expression, adipose tissue. Expression is higher in subcutaneous adipose tissue as compared to visceral adipose tissue.

It is found in the cytoplasm. The protein resides in the nucleus. The protein localises to the perinuclear region. It localises to the mitochondrion. It carries out the reaction NADP(+) + H2O = phosphate + NAD(+). The enzyme catalyses NADPH + H2O = phosphate + NADH. In terms of biological role, phosphatase which catalyzes the conversion of NADP(+) to NAD(+) and of NADPH to NADH. Shows a small preference for NADPH over NADP(+). Represses translation and promotes degradation of target mRNA molecules. Plays an important role in post-transcriptional regulation of metabolic genes under circadian control. Exerts a rhythmic post-transcriptional control of genes necessary for metabolic functions including nutrient absorption, glucose/insulin sensitivity, lipid metabolism, adipogenesis, inflammation and osteogenesis. Plays an important role in favoring adipogenesis over osteoblastogenesis and acts as a key regulator of the adipogenesis/osteogenesis balance. Promotes adipogenesis by facilitating PPARG nuclear translocation which activates its transcriptional activity. Regulates circadian expression of NOS2 in the liver and negatively regulates the circadian expression of IGF1 in the bone. Critical for proper development of early embryos. The polypeptide is Nocturnin (Homo sapiens (Human)).